A 192-amino-acid polypeptide reads, in one-letter code: uncharacterized protein (192 aa).

The signal sequence occupies residues 1 to 24; the sequence is MSGVLSCVLRACACAGLCCWVCMG. The tract at residues 140 to 192 is disordered; that stretch reads RAGADEGAGGNAAGCPEDTRGFARSPGDLMGGMNGDLGDEGETGEGGDNGAGE.

This is an uncharacterized protein from Human herpesvirus 6A (strain Uganda-1102) (HHV-6 variant A).